A 219-amino-acid chain; its full sequence is MIRTVDIYDTSIIGVFATCTEDLALVPPLTKPEVCTILEEALDVRVVETLINGSTVVGALSRGNSNGFLLPYGSSVEEMQKRTGVPAGILPDRLNAVGNIVLANDSAALVHPELSDRALEIIARTLKVEVYRGTIAGIKNVGMAGVVTNKGLLVHPKVTVSEREALEEIFGLPVNIGTTNFGTQMLGSGLLANSKNFVAGSETTGPELGRIEEALGFLE.

It belongs to the eIF-6 family.

Its function is as follows. Binds to the 50S ribosomal subunit and prevents its association with the 30S ribosomal subunit to form the 70S initiation complex. The chain is Translation initiation factor 6 from Methanosarcina mazei (strain ATCC BAA-159 / DSM 3647 / Goe1 / Go1 / JCM 11833 / OCM 88) (Methanosarcina frisia).